The chain runs to 547 residues: Immunoglobulin epsilon heavy chain (547 aa).

A Pyrrolidone carboxylic acid modification is found at Gln1. 5 Ig-like domains span residues Gln1–Thr120, Pro130–Ser223, Pro232–Ala329, Pro333–Ser437, and Pro443–Ser542. The interval Gln1–Ser124 is variable (V) domain, involved in antigen recognition. Cystine bridges form between Cys22-Cys96, Cys139-Cys225, Cys153-Cys207, Cys254-Cys312, Cys358-Cys418, and Cys464-Cys524. A constant (C) domain region spans residues Gly125–Lys547. Asn145, Asn173, Asn219, Asn265, Asn371, Asn383, and Asn394 each carry an N-linked (GlcNAc...) asparagine glycan.

In terms of assembly, immunoglobulins are composed of two identical heavy chains and two identical light chains; disulfide-linked.

The protein localises to the secreted. It is found in the cell membrane. Its function is as follows. Immunoglobulins, also known as antibodies, are membrane-bound or secreted glycoproteins produced by B lymphocytes. In the recognition phase of humoral immunity, the membrane-bound immunoglobulins serve as receptors which, upon binding of a specific antigen, trigger the clonal expansion and differentiation of B lymphocytes into immunoglobulins-secreting plasma cells. Secreted immunoglobulins mediate the effector phase of humoral immunity, which results in the elimination of bound antigens. The antigen binding site is formed by the variable domain of one heavy chain, together with that of its associated light chain. Thus, each immunoglobulin has two antigen binding sites with remarkable affinity for a particular antigen. The variable domains are assembled by a process called V-(D)-J rearrangement and can then be subjected to somatic hypermutations which, after exposure to antigen and selection, allow affinity maturation for a particular antigen. This Homo sapiens (Human) protein is Immunoglobulin epsilon heavy chain.